The sequence spans 233 residues: Large ribosomal subunit protein uL1 (233 aa).

Belongs to the universal ribosomal protein uL1 family. As to quaternary structure, part of the 50S ribosomal subunit.

In terms of biological role, binds directly to 23S rRNA. The L1 stalk is quite mobile in the ribosome, and is involved in E site tRNA release. Protein L1 is also a translational repressor protein, it controls the translation of the L11 operon by binding to its mRNA. The protein is Large ribosomal subunit protein uL1 of Geobacillus kaustophilus (strain HTA426).